An 852-amino-acid polypeptide reads, in one-letter code: Ral guanine nucleotide dissociation stimulator (852 aa).

The N-terminal Ras-GEF domain occupies 57-194 (KVRTVKAGTL…RAHLLLAQLE (138 aa)). The Ras-GEF domain occupies 324–586 (PPDLVAEQFT…YTLSCELEPP (263 aa)). Disordered stretches follow at residues 606–627 (WSDR…SKSC) and 665–711 (VPES…STTR). Low complexity-rich tracts occupy residues 613-624 (STELSTSSSAHS) and 683-710 (SSPE…VSTT). One can recognise a Ras-associating domain in the interval 736–823 (DCCIIRVSLD…YDFILKKRTF (88 aa)). Tyr752 bears the Phosphotyrosine mark.

As to quaternary structure, interacts with RIT1 and RIT2. Interacts with OOG1. Interacts with TRAF3. Interacts with HRAS. Phosphorylation of Tyr-752 by MET blocks HRAS binding.

It is found in the cytoplasm. It localises to the nucleus. Functionally, functions as a guanine nucleotide exchange factor (GEF) activating either RalA or RalB GTPases and plays an important role in intracellular transport. Interacts and acts as an effector molecule for R-Ras, H-Ras, K-Ras, and Rap. During bacterial clearance, recognizes 'Lys-33'-linked polyubiquitinated TRAF3 and subsequently mediates assembly of the exocyst complex. The protein is Ral guanine nucleotide dissociation stimulator (Ralgds) of Mus musculus (Mouse).